The sequence spans 617 residues: Chaperone protein DnaK (617 aa).

A Phosphothreonine; by autocatalysis modification is found at T175. A compositionally biased stretch (low complexity) spans 578-592 (AGAEAQQGAQGTQGA). The interval 578–617 (AGAEAQQGAQGTQGADMGGNAQGKDDDNVVDADFKVEDDK) is disordered. Basic and acidic residues predominate over residues 600-617 (GKDDDNVVDADFKVEDDK).

Belongs to the heat shock protein 70 family.

In terms of biological role, acts as a chaperone. This is Chaperone protein DnaK from Clostridium novyi (strain NT).